Here is a 77-residue protein sequence, read N- to C-terminus: Acyl carrier protein (77 aa).

Positions 4–77 (SETFEKVKKI…TVQAAVDXIN (74 aa)) constitute a Carrier domain. Ser-40 is subject to O-(pantetheine 4'-phosphoryl)serine.

Belongs to the acyl carrier protein (ACP) family. Post-translationally, 4'-phosphopantetheine is transferred from CoA to a specific serine of apo-ACP by AcpS. This modification is essential for activity because fatty acids are bound in thioester linkage to the sulfhydryl of the prosthetic group.

Its subcellular location is the cytoplasm. Its pathway is lipid metabolism; fatty acid biosynthesis. Functionally, carrier of the growing fatty acid chain in fatty acid biosynthesis. In Anabaena variabilis, this protein is Acyl carrier protein.